We begin with the raw amino-acid sequence, 63 residues long: MPKMKTKSGATKRFKKTATGFKHKQSFTSHILTKKSPKRKRQLRGTKLIAKSDVASIKRMTAC.

The interval 1-22 (MPKMKTKSGATKRFKKTATGFK) is disordered.

Belongs to the bacterial ribosomal protein bL35 family.

This Marinobacter nauticus (strain ATCC 700491 / DSM 11845 / VT8) (Marinobacter aquaeolei) protein is Large ribosomal subunit protein bL35.